The chain runs to 349 residues: MNREELFDVTVIGGGPAGLYSAFYSGLREMKTKIIEFQPQLGGKIHVYPEKMIWDIGGLLPVTGEKLIEQLVQQGLTFQPEVVLNTKIESIIRNKDGIFTLKTSTGEEHFSKTVIVATGSGILNPQKLSIEGAERFEVSNLNYTVKSLKRFKNKTVIISGGGNSAIDWANELEPIAKKVYLTYRKEELSGHEAQVKQLMNSSAECFFNTSITTLIAGDNHEAIEYVELTNHETGEVSQLAIDEVIINHGYERDITLLENSELDVAIIDNYYIAGNANSESSVDGLYAAGDILKHEGKLHLIAGAFQDAGNAVNKAKQFIQPDASEYGMVSSHNEVFKKRNRELIKQMMK.

FAD is bound by residues E36, K44, Y48, I88, L123, D290, and S331.

Belongs to the ferredoxin--NADP reductase type 2 family. Homodimer. It depends on FAD as a cofactor.

It catalyses the reaction 2 reduced [2Fe-2S]-[ferredoxin] + NADP(+) + H(+) = 2 oxidized [2Fe-2S]-[ferredoxin] + NADPH. The protein is Ferredoxin--NADP reductase 1 of Bacillus thuringiensis (strain Al Hakam).